A 354-amino-acid chain; its full sequence is MNKNKRLLVMAGGTGGHVFPGLAVAKKLQQEGWEIRWLGTADRMEADLVPKHGIEIDFIKVKGLRGQGIIRMLAAPFKIVGAILQARKYIKAWQPDVVLGMGGYVSGPGGIAAWLSGVPVVLHEQNAVAGLTNQWLSRIAAKVLQAFPGAFANKDVVGNPVRQDVTALASPQERFAGRQGPVRILVMGGSQGARILNQTLPEVAGLLGDKVTIWHQAGKGSLQVTEQAYAKSTNVPHKVTEFIDDVAAAYAWADVVVCRSGALTVSELSAAGVGAIFVPFMHKDRQQALNADHLVQCGAAKMIEQMDLTAAGLAEELNQLDREVLKQMAVAAREAAIVDADVRVADVIKSLARK.

UDP-N-acetyl-alpha-D-glucosamine-binding positions include T14–G16, N126, R162, S190, I243, A262–E267, and Q287.

Belongs to the glycosyltransferase 28 family. MurG subfamily.

It localises to the cell inner membrane. The enzyme catalyses di-trans,octa-cis-undecaprenyl diphospho-N-acetyl-alpha-D-muramoyl-L-alanyl-D-glutamyl-meso-2,6-diaminopimeloyl-D-alanyl-D-alanine + UDP-N-acetyl-alpha-D-glucosamine = di-trans,octa-cis-undecaprenyl diphospho-[N-acetyl-alpha-D-glucosaminyl-(1-&gt;4)]-N-acetyl-alpha-D-muramoyl-L-alanyl-D-glutamyl-meso-2,6-diaminopimeloyl-D-alanyl-D-alanine + UDP + H(+). It functions in the pathway cell wall biogenesis; peptidoglycan biosynthesis. Cell wall formation. Catalyzes the transfer of a GlcNAc subunit on undecaprenyl-pyrophosphoryl-MurNAc-pentapeptide (lipid intermediate I) to form undecaprenyl-pyrophosphoryl-MurNAc-(pentapeptide)GlcNAc (lipid intermediate II). The chain is UDP-N-acetylglucosamine--N-acetylmuramyl-(pentapeptide) pyrophosphoryl-undecaprenol N-acetylglucosamine transferase from Photobacterium profundum (strain SS9).